The primary structure comprises 930 residues: Carnosine synthase 1 (930 aa).

The disordered stretch occupies residues 1-24 (MISVDRLSEEQALGMKEQEWAGPE). The ATP-grasp domain occupies 624–825 (RPPPAAFSVP…LLLAAVLLAL (202 aa)). 650-716 (VPFPAVAKLE…MEYVPGTEHD (67 aa)) serves as a coordination point for ATP. Residues Glu-782, Glu-794, and Asn-796 each coordinate Mg(2+). The Mn(2+) site is built by Glu-782, Glu-794, and Asn-796.

As to quaternary structure, homotetramer. Mg(2+) is required as a cofactor. Requires Mn(2+) as cofactor.

The catalysed reaction is beta-alanine + L-histidine + ATP = carnosine + ADP + phosphate + H(+). It catalyses the reaction 4-aminobutanoate + L-histidine + ATP = L-homocarnosine + ADP + phosphate + H(+). In terms of biological role, catalyzes the synthesis of carnosine and homocarnosine. Carnosine is synthesized more efficiently than homocarnosine. This is Carnosine synthase 1 from Gallus gallus (Chicken).